Consider the following 1010-residue polypeptide: Trifunctional purine biosynthetic protein adenosine-3 (1010 aa).

An N-acetylalanine modification is found at A2. In terms of domain architecture, ATP-grasp spans 111 to 318 (KEFMDRHGIS…LYEVIQSILD (208 aa)). Residues 190-193 (EELL), E197, R220, and N229 contribute to the ATP site. The Mg(2+) site is built by E288 and N290. The residue at position 350 (K350) is an N6-acetyllysine. The AIRS domain stretch occupies residues 434 to 809 (GLTYKESGVD…HFSVQPKKAR (376 aa)). S440 is modified (phosphoserine). At T682 the chain carries Phosphothreonine. The residue at position 802 (S802) is a Phosphoserine. Residues 810–1010 (VAVLISGTGS…NGRICWVTED (201 aa)) are GART domain. 818–820 (GSN) lines the N(1)-(5-phospho-beta-D-ribosyl)glycinamide pocket. (6R)-10-formyltetrahydrofolate is bound by residues R871, 896 to 899 (MRIL), and N913. H915 serves as the catalytic Proton donor. Residue 947 to 951 (AEDVD) coordinates (6R)-10-formyltetrahydrofolate. 977-980 (KLAE) provides a ligand contact to N(1)-(5-phospho-beta-D-ribosyl)glycinamide.

In the N-terminal section; belongs to the GARS family. The protein in the central section; belongs to the AIR synthase family. This sequence in the C-terminal section; belongs to the GART family. In terms of assembly, homodimer. Requires Mg(2+) as cofactor. Mn(2+) is required as a cofactor.

The enzyme catalyses 5-phospho-beta-D-ribosylamine + glycine + ATP = N(1)-(5-phospho-beta-D-ribosyl)glycinamide + ADP + phosphate + H(+). It carries out the reaction 2-formamido-N(1)-(5-O-phospho-beta-D-ribosyl)acetamidine + ATP = 5-amino-1-(5-phospho-beta-D-ribosyl)imidazole + ADP + phosphate + H(+). The catalysed reaction is N(1)-(5-phospho-beta-D-ribosyl)glycinamide + (6R)-10-formyltetrahydrofolate = N(2)-formyl-N(1)-(5-phospho-beta-D-ribosyl)glycinamide + (6S)-5,6,7,8-tetrahydrofolate + H(+). Its pathway is purine metabolism; IMP biosynthesis via de novo pathway; 5-amino-1-(5-phospho-D-ribosyl)imidazole from N(2)-formyl-N(1)-(5-phospho-D-ribosyl)glycinamide: step 2/2. It functions in the pathway purine metabolism; IMP biosynthesis via de novo pathway; N(1)-(5-phospho-D-ribosyl)glycinamide from 5-phospho-alpha-D-ribose 1-diphosphate: step 2/2. The protein operates within purine metabolism; IMP biosynthesis via de novo pathway; N(2)-formyl-N(1)-(5-phospho-D-ribosyl)glycinamide from N(1)-(5-phospho-D-ribosyl)glycinamide (10-formyl THF route): step 1/1. In terms of biological role, trifunctional enzyme that catalyzes three distinct reactions as part of the 'de novo' inosine monophosphate biosynthetic pathway. The polypeptide is Trifunctional purine biosynthetic protein adenosine-3 (GART) (Bos taurus (Bovine)).